Consider the following 288-residue polypeptide: Phosphatidylserine decarboxylase proenzyme (288 aa).

Catalysis depends on charge relay system; for autoendoproteolytic cleavage activity residues Asp89, His146, and Ser252. Residue Ser252 is the Schiff-base intermediate with substrate; via pyruvic acid; for decarboxylase activity of the active site. Residue Ser252 is modified to Pyruvic acid (Ser); by autocatalysis.

The protein belongs to the phosphatidylserine decarboxylase family. PSD-B subfamily. Prokaryotic type I sub-subfamily. As to quaternary structure, heterodimer of a large membrane-associated beta subunit and a small pyruvoyl-containing alpha subunit. It depends on pyruvate as a cofactor. Post-translationally, is synthesized initially as an inactive proenzyme. Formation of the active enzyme involves a self-maturation process in which the active site pyruvoyl group is generated from an internal serine residue via an autocatalytic post-translational modification. Two non-identical subunits are generated from the proenzyme in this reaction, and the pyruvate is formed at the N-terminus of the alpha chain, which is derived from the carboxyl end of the proenzyme. The autoendoproteolytic cleavage occurs by a canonical serine protease mechanism, in which the side chain hydroxyl group of the serine supplies its oxygen atom to form the C-terminus of the beta chain, while the remainder of the serine residue undergoes an oxidative deamination to produce ammonia and the pyruvoyl prosthetic group on the alpha chain. During this reaction, the Ser that is part of the protease active site of the proenzyme becomes the pyruvoyl prosthetic group, which constitutes an essential element of the active site of the mature decarboxylase.

It is found in the cell membrane. It carries out the reaction a 1,2-diacyl-sn-glycero-3-phospho-L-serine + H(+) = a 1,2-diacyl-sn-glycero-3-phosphoethanolamine + CO2. It participates in phospholipid metabolism; phosphatidylethanolamine biosynthesis; phosphatidylethanolamine from CDP-diacylglycerol: step 2/2. Catalyzes the formation of phosphatidylethanolamine (PtdEtn) from phosphatidylserine (PtdSer). The sequence is that of Phosphatidylserine decarboxylase proenzyme from Shewanella frigidimarina (strain NCIMB 400).